Consider the following 124-residue polypeptide: Immunoglobulin lambda variable 5-52 (124 aa).

An N-terminal signal peptide occupies residues 1–19; that stretch reads MAWTLLLLVLLSHCTGSLS. Residues 20-44 are framework-1; sequence QPVLTQPSSHSASSGASVRLTCMLS. Residues 21 to 124 enclose the Ig-like domain; that stretch reads PVLTQPSSHS…CGTWHSNSKT (104 aa). An intrachain disulfide couples Cys-41 to Cys-115. A complementarity-determining-1 region spans residues 45 to 53; it reads SGFSVGDFW. Residues 54-70 form a framework-2 region; sequence IRWYQQKPGNPPRYLLY. A complementarity-determining-2 region spans residues 71–77; sequence YHSDSNK. The segment at 78–115 is framework-3; it reads GQGSGVPSRFSGSNDASANAGILRISGLQPEDEADYYC. A complementarity-determining-3 region spans residues 116-124; that stretch reads GTWHSNSKT.

Immunoglobulins are composed of two identical heavy chains and two identical light chains; disulfide-linked.

Its subcellular location is the secreted. It localises to the cell membrane. V region of the variable domain of immunoglobulin light chains that participates in the antigen recognition. Immunoglobulins, also known as antibodies, are membrane-bound or secreted glycoproteins produced by B lymphocytes. In the recognition phase of humoral immunity, the membrane-bound immunoglobulins serve as receptors which, upon binding of a specific antigen, trigger the clonal expansion and differentiation of B lymphocytes into immunoglobulins-secreting plasma cells. Secreted immunoglobulins mediate the effector phase of humoral immunity, which results in the elimination of bound antigens. The antigen binding site is formed by the variable domain of one heavy chain, together with that of its associated light chain. Thus, each immunoglobulin has two antigen binding sites with remarkable affinity for a particular antigen. The variable domains are assembled by a process called V-(D)-J rearrangement and can then be subjected to somatic hypermutations which, after exposure to antigen and selection, allow affinity maturation for a particular antigen. The sequence is that of Immunoglobulin lambda variable 5-52 from Homo sapiens (Human).